A 120-amino-acid polypeptide reads, in one-letter code: Large ribosomal subunit protein eL18 (120 aa).

Belongs to the eukaryotic ribosomal protein eL18 family.

The protein is Large ribosomal subunit protein eL18 of Pyrococcus horikoshii (strain ATCC 700860 / DSM 12428 / JCM 9974 / NBRC 100139 / OT-3).